An 867-amino-acid chain; its full sequence is Dynamin-1 (867 aa).

One can recognise a Dynamin-type G domain in the interval 28 to 294 (DLDLPQIAVV…LTNHIRDTLP (267 aa)). The segment at 38 to 45 (GGQSAGKS) is G1 motif. Residues S41, G43, K44, S45, S46, R59, and G60 each contribute to the GDP site. A G2 motif region spans residues 64-66 (VTR). Y80 is subject to Phosphotyrosine. Residue Y125 is modified to 3'-nitrotyrosine; alternate. Y125 carries the post-translational modification Phosphotyrosine; alternate. Residues 136-139 (DLPG) form a G3 motif region. The interval 205-208 (TKLD) is G4 motif. The GDP site is built by K206, D208, D211, N236, R237, and Q239. The G5 motif stretch occupies residues 235–238 (VNRS). Phosphoserine occurs at positions 306 and 347. The residue at position 354 (Y354) is a Phosphotyrosine. S512 is modified (phosphoserine). Positions 515–625 (QDEILVIRKG…WKASFLRAGV (111 aa)) constitute a PH domain. The GED domain maps to 659-750 (VETIRNLVDS…IIGDINTTTV (92 aa)). A disordered region spans residues 767–867 (SVPAGRRSPT…HENRAGKARL (101 aa)). Residues S774 and S778 each carry the phosphoserine modification. At R796 the chain carries Omega-N-methylarginine. Position 822 is a phosphoserine (S822). Positions 825 to 843 (PFGPPPQVPSRPNRAPPGV) are enriched in pro residues. 3 positions are modified to phosphoserine: G847, L851, and K857. A compositionally biased stretch (basic and acidic residues) spans 856-867 (GKHENRAGKARL).

Belongs to the TRAFAC class dynamin-like GTPase superfamily. Dynamin/Fzo/YdjA family. In terms of assembly, homodimer; homodimerization is mediated by the dynamin-type G domain which promotes assembly-stimulated GTPase activity. Homo-tetramer formed from two dimers in the absence of lipid. Oligomerizes into a helical polymer that self-assembles around the vesicle membrane, when associated to the menbrane through lipid binding. Interacts (via C-terminal proline-rich domain (PRD)) with SNX9 (via SH3 domain); this interaction allows regulation of DNM1 self-assembly during late stages of endocytic vesicle formation and supports DNM1's early functions in accelerating clathrin-coated pits (CCPs) maturation in non neuronals cell. Interacts (via C-terminal proline-rich domain (PRD)) with MYO1E (via SH3 domain); this interaction regulates receptor-mediated endocytosis. Interacts with SNX33 (via SH3 domain); this interaction decreases DNM1-dependent endocytosis. Interacts with DIAPH1. Interacts with GRB2 (via SH3 domain); this interaction mediates disassembly of DNM1 polymers, therefore modulates self-assembly. Forms a complex with BIN1 (via SH3 domain) and SH3GL2 (via SH3 domain). Forms a complex with SH3GL2 (via SH3 domain) and AMPH (via SH3 domain). Forms a complex with SH3GL2 (via SH3 domain) and SYNJ1. Interacts (via C-terminal proline-rich domain (PRD)) with SYT1; this interaction facilitates vesicle fission during clathrin-mediated endocytosis (CME). Interacts (via C-terminal proline-rich domain (PRD)) with PLCG1 (via SH3 domain); this interaction stimulates the release of GDP from DNM1 and enhances DNM1-dependent endocytosis. Interacts with SNPH; this interaction inhibits the binding of DNM1 to AMPH and DNM1-receptor-mediated endocytosis. Interacts with CAV1. Interacts with SH3GLB1 (via SH3 domain). Interacts with PACSIN1 (via SH3 domain), PACSIN2 (via SH3 domain) and PACSIN3 (via SH3 domain). Interacts with UNC119; this interaction decreases DNM1's GTPase activity and affects DNM1's interaction with AMPH. Interacts with AMPH. Interacts (GTP-bound form) with DNAJC6; this interaction allows clathrin-coated vesicle (CCV) formation at the plasma membrane. Phosphorylation at Ser-774 by GSK3B/GSK3-beta leads to inactivation of receptor-mediated endocytosis in non-neuronal cells. Dephosphorylation at Ser-774, through the EGFR downstream signaling, leads to activation and regulates early stages of clathrin-mediated endocytosis (CME). Phosphorylated on Tyr in response to EGF stimulation in cells expressing truncated EGFR. Phosphorylated by CDK5 leading to synaptic vesicle endocytosis (SVE) activation. As to expression, expressed exclusively in the brain.

The protein localises to the cell membrane. It is found in the membrane. It localises to the clathrin-coated pit. The protein resides in the cytoplasmic vesicle. Its subcellular location is the presynapse. The protein localises to the secretory vesicle. It is found in the chromaffin granule. The enzyme catalyses GTP + H2O = GDP + phosphate + H(+). In terms of biological role, catalyzes the hydrolysis of GTP and utilizes this energy to mediate vesicle scission and participates in many forms of endocytosis, such as clathrin-mediated endocytosis or synaptic vesicle endocytosis as well as rapid endocytosis (RE). Associates to the membrane, through lipid binding, and self-assembles into rings and stacks of interconnected rings through oligomerization to form a helical polymer around the vesicle membrane leading to constriction of invaginated coated pits around their necks. Self-assembly of the helical polymer induces membrane tubules narrowing until the polymer reaches a length sufficient to trigger GTP hydrolysis. Depending on the curvature imposed on the tubules, membrane detachment from the helical polymer upon GTP hydrolysis can cause spontaneous hemifission followed by complete fission. May play a role in regulating early stages of clathrin-mediated endocytosis in non-neuronal cells through its activation by dephosphorylation via the signaling downstream of EGFR. Controls vesicle size at a step before fission, during formation of membrane pits, at hippocampal synapses. Controls plastic adaptation of the synaptic vesicle recycling machinery to high levels of activity. Mediates rapid endocytosis (RE), a Ca(2+)-dependent and clathrin- and K(+)-independent process in chromaffin cells. Microtubule-associated force-producing protein involved in producing microtubule bundles and able to bind and hydrolyze GTP. Through its interaction with DNAJC6, acts during the early steps of clathrin-coated vesicle (CCV) formation. This Mus musculus (Mouse) protein is Dynamin-1.